The sequence spans 78 residues: ATP synthase subunit a (78 aa).

Helical transmembrane passes span 13–33 (LFGN…LGTS), 35–55 (FLGA…GMFI), and 57–77 (SLQA…KVEA).

It belongs to the ATPase A chain family. F-type ATPases have 2 components, CF(1) - the catalytic core - and CF(0) - the membrane proton channel. CF(1) has five subunits: alpha(3), beta(3), gamma(1), delta(1), epsilon(1). CF(0) has three main subunits: a(1), b(2) and c(9-12). The alpha and beta chains form an alternating ring which encloses part of the gamma chain. CF(1) is attached to CF(0) by a central stalk formed by the gamma and epsilon chains, while a peripheral stalk is formed by the delta and b chains.

It is found in the cell membrane. In terms of biological role, key component of the proton channel; it plays a direct role in the translocation of protons across the membrane. In Alkalihalobacillus alcalophilus (Bacillus alcalophilus), this protein is ATP synthase subunit a (atpB).